The sequence spans 64 residues: Large ribosomal subunit protein uL29 (64 aa).

It belongs to the universal ribosomal protein uL29 family.

In Nitratiruptor sp. (strain SB155-2), this protein is Large ribosomal subunit protein uL29.